We begin with the raw amino-acid sequence, 38 residues long: Large ribosomal subunit protein bL36 (38 aa).

The protein belongs to the bacterial ribosomal protein bL36 family.

The chain is Large ribosomal subunit protein bL36 from Methylacidiphilum infernorum (isolate V4) (Methylokorus infernorum (strain V4)).